The following is a 348-amino-acid chain: MNGTEGPNFYVPFSNATGVVRSPFEYPQYYLAEPWQFSMLAAYMFLLIVLGFPINFLTLYVTVQHKKLRTPLNYILLNLAVADLFMVFGGFTTTLYTSLHGYFVFGPTGCNLEGFFATLGGEIALWSLVVLAIERYVVICKPMSNFRFGENHAIMGVVFTWIMALACAAPPLVGWSRYIPEGMQCSCGVDYYTLKPEVNNESFVIYMFVVHFTIPLIVIFFCYGQLVFTVKEAAAQQQESATTQKAEKEVTRMVILMVVFFLICWFPYAGVAFYIFTHQGSNFGPIFMTLPAFFAKSSSIYNPVIYIMMNKQFRNCMLTTLCCGKNILGDDEASATASKTETSQVAPA.

N-acetylmethionine is present on M1. At 1–36 the chain is on the extracellular side; the sequence is MNGTEGPNFYVPFSNATGVVRSPFEYPQYYLAEPWQ. N-linked (GlcNAc...) asparagine glycosylation is found at N2 and N15. The chain crosses the membrane as a helical span at residues 37–61; it reads FSMLAAYMFLLIVLGFPINFLTLYV. Residues 62 to 73 are Cytoplasmic-facing; it reads TVQHKKLRTPLN. Residues 74–96 form a helical membrane-spanning segment; sequence YILLNLAVADLFMVFGGFTTTLY. Over 97 to 110 the chain is Extracellular; the sequence is TSLHGYFVFGPTGC. The cysteines at positions 110 and 187 are disulfide-linked. Residues 111-133 form a helical membrane-spanning segment; sequence NLEGFFATLGGEIALWSLVVLAI. The short motif at 134 to 136 is the 'Ionic lock' involved in activated form stabilization element; it reads ERY. Residues 134 to 152 lie on the Cytoplasmic side of the membrane; it reads ERYVVICKPMSNFRFGENH. Residues 153-173 form a helical membrane-spanning segment; it reads AIMGVVFTWIMALACAAPPLV. Topologically, residues 174-202 are extracellular; the sequence is GWSRYIPEGMQCSCGVDYYTLKPEVNNES. Residue E201 participates in Zn(2+) binding. A helical transmembrane segment spans residues 203-224; that stretch reads FVIYMFVVHFTIPLIVIFFCYG. Topologically, residues 225-252 are cytoplasmic; the sequence is QLVFTVKEAAAQQQESATTQKAEKEVTR. The helical transmembrane segment at 253 to 274 threads the bilayer; that stretch reads MVILMVVFFLICWFPYAGVAFY. Topologically, residues 275 to 286 are extracellular; the sequence is IFTHQGSNFGPI. Q279 serves as a coordination point for Zn(2+). The chain crosses the membrane as a helical span at residues 287 to 308; it reads FMTLPAFFAKSSSIYNPVIYIM. K296 bears the N6-(retinylidene)lysine mark. Residues 309–348 are Cytoplasmic-facing; that stretch reads MNKQFRNCMLTTLCCGKNILGDDEASATASKTETSQVAPA. 2 S-palmitoyl cysteine lipidation sites follow: C322 and C323. Positions 330 to 348 are interaction with SAG; that stretch reads DDEASATASKTETSQVAPA. Position 334 is a phosphoserine (S334). T336 is modified (phosphothreonine). The residue at position 338 (S338) is a Phosphoserine. Phosphothreonine occurs at positions 340 and 342. S343 carries the phosphoserine modification.

It belongs to the G-protein coupled receptor 1 family. Opsin subfamily. Homodimer. May form a complex composed of RHO, GRK1 and RCVRN in a Ca(2+)-dependent manner; RCVRN prevents the interaction between GRK1 and RHO. Interacts with GRK1. Interacts (phosphorylated form) with SAG. Interacts with GNAT1. Interacts with GNAT3. SAG and G-proteins compete for a common binding site. Interacts with PRCD; the interaction promotes PRCD stability. Forms a complex with ASAP1 and ARF4. Forms a complex with ASAP1, RAB11A, Rabin8/RAB3IP, ARF4 and RAB11FIP3; the complex regulates Golgi-to-cilia rhodopsin/RHO transport in photoreceptors. Phosphorylated on some or all of the serine and threonine residues present in the C-terminal region. In terms of processing, contains one covalently linked retinal chromophore. Upon light absorption, the covalently bound 11-cis-retinal is converted to all-trans-retinal. After hydrolysis of the Schiff base and release of the covalently bound all-trans-retinal, active rhodopsin is regenerated by binding of a fresh molecule of 11-cis-retinal.

It is found in the membrane. Its subcellular location is the cell projection. It localises to the cilium. The protein resides in the photoreceptor outer segment. In terms of biological role, photoreceptor required for image-forming vision at low light intensity. Required for photoreceptor cell viability after birth. Light-induced isomerization of 11-cis to all-trans retinal triggers a conformational change that activates signaling via G-proteins. Subsequent receptor phosphorylation mediates displacement of the bound G-protein alpha subunit by the arrestin SAG and terminates signaling. The polypeptide is Rhodopsin (RHO) (Cricetulus griseus (Chinese hamster)).